The following is a 289-amino-acid chain: (3R)-3-[(carboxymethyl)amino]fatty acid oxygenase/decarboxylase (289 aa).

Residues Tyr-65, Tyr-70, and Gly-93 each contribute to the a (3R)-3-[(carboxymethyl)amino]fatty acid site. Fe(2+) contacts are provided by His-97 and Asp-99. Residues Tyr-100 and Lys-158 each coordinate a (3R)-3-[(carboxymethyl)amino]fatty acid. His-260 contributes to the Fe(2+) binding site. His-264 is a binding site for 2-oxoglutarate. Arg-275 is a binding site for a (3R)-3-[(carboxymethyl)amino]fatty acid.

Belongs to the TfdA dioxygenase family. Fe(2+) serves as cofactor.

It catalyses the reaction a (3R)-3-[(carboxymethyl)amino]fatty acid + 2 2-oxoglutarate + 2 O2 = a (3R)-3-isocyanyl-fatty acid + 2 succinate + 3 CO2 + 2 H2O. The catalysed reaction is a (3R)-3-[(carboxymethyl)amino]fatty acid + 2-oxoglutarate + O2 = a (3R)-3-{[carboxy(hydroxy)methyl]amino}fatty acid + succinate + CO2. It carries out the reaction a (3R)-3-{[carboxy(hydroxy)methyl]amino}fatty acid + 2-oxoglutarate + O2 = a (3R)-3-isocyanyl-fatty acid + succinate + 2 CO2 + 2 H2O. In terms of biological role, involved in the biosynthesis of a unique class of isonitrile lipopeptides (INLPs) that seem to play a role in metal acquisition. Catalyzes the conversion of (3R)-3-[(carboxymethyl)amino]fatty acids to (3R)-3-isocyanyl-fatty acids through an oxidative decarboxylation mechanism, thereby generating the isonitrile group of INLPs. The polypeptide is (3R)-3-[(carboxymethyl)amino]fatty acid oxygenase/decarboxylase (Mycobacterium bovis (strain ATCC BAA-935 / AF2122/97)).